We begin with the raw amino-acid sequence, 540 residues long: Phosphoenolpyruvate carboxykinase (ATP) (540 aa).

Substrate is bound by residues arginine 67, tyrosine 207, and lysine 213. ATP is bound by residues lysine 213, histidine 232, and 248 to 256 (GLSGTGKTT). Mn(2+)-binding residues include lysine 213 and histidine 232. Aspartate 269 is a Mn(2+) binding site. Residues glutamate 297, arginine 333, 449–450 (RI), and threonine 455 contribute to the ATP site. Residue arginine 333 coordinates substrate.

Belongs to the phosphoenolpyruvate carboxykinase (ATP) family. As to quaternary structure, monomer. It depends on Mn(2+) as a cofactor.

The protein resides in the cytoplasm. It carries out the reaction oxaloacetate + ATP = phosphoenolpyruvate + ADP + CO2. Its pathway is carbohydrate biosynthesis; gluconeogenesis. In terms of biological role, involved in the gluconeogenesis. Catalyzes the conversion of oxaloacetate (OAA) to phosphoenolpyruvate (PEP) through direct phosphoryl transfer between the nucleoside triphosphate and OAA. This is Phosphoenolpyruvate carboxykinase (ATP) from Aliivibrio fischeri (strain MJ11) (Vibrio fischeri).